The following is a 79-amino-acid chain: Putative defensin-like protein 203 (79 aa).

The first 27 residues, 1 to 27 (MAKLIVNFSALLMIILLVSNGLPKAVA), serve as a signal peptide directing secretion. Cystine bridges form between Cys30-Cys79, Cys40-Cys64, Cys49-Cys73, and Cys53-Cys75.

Belongs to the DEFL family.

Its subcellular location is the secreted. This Arabidopsis thaliana (Mouse-ear cress) protein is Putative defensin-like protein 203.